A 437-amino-acid polypeptide reads, in one-letter code: Aspartic proteinase nepenthesin-1 (437 aa).

The first 24 residues, 1-24, serve as a signal peptide directing secretion; sequence MASSLYSFLLALSIVYIFVAPTHS. Residues 25–78 constitute a propeptide, activation peptide; it reads TSRTALNHRHEAKVTGFQIMLEHVDSGKNLTKFQLLERAIERGSRRLQRLEAML. N53 and N98 each carry an N-linked (GlcNAc...) asparagine glycan. In terms of domain architecture, Peptidase A1 spans 95 to 430; the sequence is YLMNLSIGTP…DTGNSVVSFA (336 aa). The active site involves D113. Intrachain disulfides connect C123/C126, C129/C203, C150/C168, C155/C163, C240/C434, and C354/C395. An N-linked (GlcNAc...) asparagine glycan is attached at N131. N198, N267, and N307 each carry an N-linked (GlcNAc...) asparagine glycan. D315 is a catalytic residue. N-linked (GlcNAc...) asparagine glycosylation occurs at N345.

The protein belongs to the peptidase A1 family.

The protein localises to the secreted. The enzyme catalyses Similar to pepsin, but also cleaves on either side of Asp and at Lys-|-Arg.. Inhibited by pepstatin and by diazoacetyl-D,L-norleucine methyl ester (DAN) in the presence of Cu(2+) ions. In terms of biological role, extracellular proteinase found in the pitcher fluid of carnivorous plants. Digest prey for nitrogen uptake. This Nepenthes gracilis (Slender pitcher plant) protein is Aspartic proteinase nepenthesin-1 (nep1).